A 378-amino-acid polypeptide reads, in one-letter code: Envelope glycoprotein M (378 aa).

At methionine 1–lysine 16 the chain is on the intravirion side. A helical transmembrane segment spans residues leucine 17–phenylalanine 37. Residues proline 38–threonine 84 lie on the Virion surface side of the membrane. Residues phenylalanine 85 to alanine 105 form a helical membrane-spanning segment. The Intravirion portion of the chain corresponds to lysine 106–glutamine 118. Residues tryptophan 119 to isoleucine 139 form a helical membrane-spanning segment. The Virion surface portion of the chain corresponds to glutamine 140–histidine 150. Residues isoleucine 151–cysteine 171 traverse the membrane as a helical segment. At tyrosine 172–glutamine 210 the chain is on the intravirion side. The chain crosses the membrane as a helical span at residues leucine 211 to asparagine 231. Residues serine 232–aspartate 239 are Virion surface-facing. A helical membrane pass occupies residues isoleucine 240 to glutamate 260. Over leucine 261–threonine 268 the chain is Intravirion. Residues phenylalanine 269–tryptophan 289 form a helical membrane-spanning segment. The Virion surface segment spans residues arginine 290–proline 303. Residues isoleucine 304–leucine 324 form a helical membrane-spanning segment. At arginine 325–leucine 378 the chain is on the intravirion side. Positions arginine 347–leucine 378 are disordered. The segment covering glycine 363 to leucine 378 has biased composition (acidic residues).

It belongs to the herpesviridae glycoprotein M family. As to quaternary structure, interacts (via N-terminus) with gN (via N-terminus). The gM-gN heterodimer forms the gCII complex.

It localises to the virion membrane. The protein localises to the host Golgi apparatus. The protein resides in the host trans-Golgi network. Its subcellular location is the host endosome membrane. It is found in the host nucleus inner membrane. In terms of biological role, envelope glycoprotein important for virion assembly and egress. Plays a role in the correct incorporation of gH-gL into virion membrane. Directs the glycoprotein N (gN) to the host trans-Golgi network. This chain is Envelope glycoprotein M, found in Equus caballus (Horse).